A 370-amino-acid chain; its full sequence is 3-dehydroquinate synthase (370 aa).

NAD(+) is bound by residues 112–116 (GVVGD), 136–137 (TS), K149, K158, and 176–179 (TLRT). Residues E191, H254, and H276 each coordinate Zn(2+).

The protein belongs to the sugar phosphate cyclases superfamily. Dehydroquinate synthase family. Co(2+) is required as a cofactor. It depends on Zn(2+) as a cofactor. The cofactor is NAD(+).

It localises to the cytoplasm. It catalyses the reaction 7-phospho-2-dehydro-3-deoxy-D-arabino-heptonate = 3-dehydroquinate + phosphate. Its pathway is metabolic intermediate biosynthesis; chorismate biosynthesis; chorismate from D-erythrose 4-phosphate and phosphoenolpyruvate: step 2/7. Functionally, catalyzes the conversion of 3-deoxy-D-arabino-heptulosonate 7-phosphate (DAHP) to dehydroquinate (DHQ). This is 3-dehydroquinate synthase from Xanthomonas campestris pv. campestris (strain 8004).